A 503-amino-acid chain; its full sequence is Putative cytochrome P450 71A28 (503 aa).

Residues 1-21 (MILISLCFTTFLAFLFLNPLL) form a helical membrane-spanning segment. Cys-443 is a binding site for heme.

It belongs to the cytochrome P450 family. It depends on heme as a cofactor.

The protein localises to the membrane. This is Putative cytochrome P450 71A28 (CYP71A28) from Arabidopsis thaliana (Mouse-ear cress).